Here is a 370-residue protein sequence, read N- to C-terminus: Cysteine-type anaerobic sulfatase-maturating enzyme (370 aa).

The 227-residue stretch at 1-227 (MPPLSLLIKP…LKNLFDFWYE (227 aa)) folds into the Radical SAM core domain. Positions 15 and 19 each coordinate [4Fe-4S] cluster. Residue Tyr-21 participates in S-adenosyl-L-methionine binding. Position 22 (Cys-22) interacts with [4Fe-4S] cluster. Gly-66, Ser-122, Arg-134, and Leu-195 together coordinate S-adenosyl-L-methionine. 3 residues coordinate [4Fe-4S] cluster: Cys-255, Cys-261, and Cys-276. Catalysis depends on Asp-277, which acts as the Proton acceptor. Cys-317, Cys-320, Cys-326, Cys-330, and Cys-348 together coordinate [4Fe-4S] cluster.

The protein belongs to the radical SAM superfamily. Anaerobic sulfatase-maturating enzyme family. Monomer. Requires [4Fe-4S] cluster as cofactor.

The enzyme catalyses L-cysteinyl-[sulfatase] + S-adenosyl-L-methionine + H2O = 3-oxo-L-alanyl-[sulfatase] + hydrogen sulfide + 5'-deoxyadenosine + L-methionine + 2 H(+). It participates in protein modification; sulfatase oxidation. Its function is as follows. Involved in 'Cys-type' sulfatase maturation under anaerobic conditions. Catalyzes the post-translational modification of cysteine ('Cys-51' in the arylsulfatase CPF_0221) into 3-oxoalanine (also known as C(alpha)-formylglycine (FGly)), by a free radical chemical mechanism initiated via the reductive cleavage of S-adenosyl-L-methionine (SAM). Is also able to oxidize a serine residue in a synthetic substrate to FGly in vitro, and in a serine variant of a Cys-type sulfatase in vivo, but this activity is not physiological. Converts threonyl peptides to the corresponding ketone product, and also allo-threonyl peptides, but with a significantly reduced efficiency. In Clostridium perfringens (strain ATCC 13124 / DSM 756 / JCM 1290 / NCIMB 6125 / NCTC 8237 / Type A), this protein is Cysteine-type anaerobic sulfatase-maturating enzyme.